Consider the following 97-residue polypeptide: C-C motif chemokine 7 (97 aa).

A signal peptide spans 1 to 23 (MQISAALLCVLLTAAAFTVHVWA). Gln24 is subject to Pyrrolidone carboxylic acid. N-linked (GlcNAc...) asparagine glycosylation occurs at Asn29. Disulfide bonds link Cys33–Cys57 and Cys34–Cys73.

The protein belongs to the intercrine beta (chemokine CC) family. Monomer. Interacts with TNFAIP6 (via Link domain).

Its subcellular location is the secreted. In terms of biological role, chemotactic factor that attracts monocytes and eosinophils, but not neutrophils. Augments monocyte anti-tumor activity. The sequence is that of C-C motif chemokine 7 (Ccl7) from Rattus norvegicus (Rat).